The sequence spans 446 residues: Glycine--tRNA ligase (446 aa).

Residues Arg-100 and Glu-158 each contribute to the substrate site. ATP contacts are provided by residues 190-192, 200-205, 275-276, and 319-322; these read RNE, FRTREF, EL, and GIER. Residue 205-209 coordinates substrate; sequence FEQFE. 315–319 provides a ligand contact to substrate; it reads EPAVG.

This sequence belongs to the class-II aminoacyl-tRNA synthetase family. In terms of assembly, homodimer.

The protein resides in the cytoplasm. It catalyses the reaction tRNA(Gly) + glycine + ATP = glycyl-tRNA(Gly) + AMP + diphosphate. In terms of biological role, catalyzes the attachment of glycine to tRNA(Gly). The chain is Glycine--tRNA ligase from Mycoplasma genitalium (strain ATCC 33530 / DSM 19775 / NCTC 10195 / G37) (Mycoplasmoides genitalium).